We begin with the raw amino-acid sequence, 112 residues long: Ig kappa chain V-II region 2S1.3 (112 aa).

A framework-1 region spans residues Asp1 to Cys23. Cysteines 23 and 93 form a disulfide. The interval Arg24–Tyr39 is complementarity-determining-1. Residues Trp40–Tyr54 form a framework-2 region. Positions Gln55–Ser61 are complementarity-determining-2. The segment at Gly62–Cys93 is framework-3. A complementarity-determining-3 region spans residues Ala94–Thr102. The framework-4 stretch occupies residues Phe103–Lys112.

This is Ig kappa chain V-II region 2S1.3 from Mus musculus (Mouse).